The chain runs to 158 residues: C-type lectin BiL (158 aa).

The first 23 residues, 1 to 23 (MGRFIFVSFGLLVVFLSLSGAKG), serve as a signal peptide directing secretion. Intrachain disulfides connect cysteine 26–cysteine 37, cysteine 54–cysteine 154, cysteine 61–cysteine 156, and cysteine 129–cysteine 146. Positions 33-155 (MNGLCYKIFD…CESKNAFLCQ (123 aa)) constitute a C-type lectin domain. Glutamine 119, aspartate 121, glutamate 127, asparagine 142, and aspartate 143 together coordinate Ca(2+). Residues 119-121 (QPD) carry the Galactose-binding motif.

In terms of assembly, homodimer; disulfide-linked. Expressed by the venom gland.

It localises to the secreted. In terms of biological role, lectin with a hemagglutinating activity that is inhibited by galactose, lactose and EDTA. Is calcium-dependent. Shows effects on the renal function of isolated perfused rat kidneys by increasing both perfusion pressure (PP) and renal vascular resistance (RVR). In addition, the urinary flow and glomerular filtration rate (GFR) decreases significantly. The changes observed may reflect direct injury to the glomerular and tubular renal cells, and the rise in permeability in the glomerular endothelial cells, may be the effect of interactions of C-type lectin with endothelial cells or due to release of other mediators by mesangial, tubular and endothelial cells. The protein is C-type lectin BiL of Bothrops insularis (Golden lancehead).